Reading from the N-terminus, the 594-residue chain is Glomulin (594 aa).

Position 2 is an N-acetylalanine (Ala-2). Residues 2–553 (AVEELQSIIK…EEIPNMPPEM (552 aa)) are alpha-helical region with structural similarity to HEAT repeats. The important for interaction with RBX1 stretch occupies residues 300–594 (IDQLPMVLSP…STSEENIGIK (295 aa)).

As to quaternary structure, interacts with FKBP4 and FKBP1A. Isoform 1: Interacts with RBX1 (via RING domain). Identified in complexes that contain RBX1 plus one of the cullins CUL1, CUL2, CUL3, and CUL4A. Identified in a SCF complex composed of CUL1, RBX1, SKP1, FBXW7 and GLMN. Component of a SCF-like complex consisting of CUL7, RBX1, SKP1, FBXW8 and GLMN. Interacts with unphosphorylated MET and is released upon MET phosphorylation. In terms of processing, phosphorylated on tyrosine residues. Ubiquitous.

In terms of biological role, regulatory component of cullin-RING-based SCF (SKP1-Cullin-F-box protein) E3 ubiquitin-protein ligase complexes. Inhibits E3 ubiquitin ligase activity by binding to RBX1 (via RING domain) and inhibiting its interaction with the E2 ubiquitin-conjugating enzyme CDC34. Inhibits RBX1-mediated neddylation of CUL1. Required for normal stability and normal cellular levels of key components of SCF ubiquitin ligase complexes, including FBXW7, RBX1, CUL1, CUL2, CUL3, CUL4A, and thereby contributes to the regulation of CCNE1 and MYC levels. Essential for normal development of the vasculature. Contributes to the regulation of RPS6KB1 phosphorylation. This Homo sapiens (Human) protein is Glomulin (GLMN).